The primary structure comprises 207 residues: Small ribosomal subunit protein uS4 (207 aa).

Residues Lys31–Gln55 are disordered. Residues Gly42–Gly53 are compositionally biased toward polar residues. The 64-residue stretch at Ser97–Leu160 folds into the S4 RNA-binding domain.

This sequence belongs to the universal ribosomal protein uS4 family. Part of the 30S ribosomal subunit. Contacts protein S5. The interaction surface between S4 and S5 is involved in control of translational fidelity.

Functionally, one of the primary rRNA binding proteins, it binds directly to 16S rRNA where it nucleates assembly of the body of the 30S subunit. With S5 and S12 plays an important role in translational accuracy. The sequence is that of Small ribosomal subunit protein uS4 from Burkholderia multivorans (strain ATCC 17616 / 249).